A 387-amino-acid chain; its full sequence is Phosphoglycerate kinase (387 aa).

Substrate contacts are provided by residues 21–23 (DLN), R36, 59–62 (HLGR), R113, and R146. ATP contacts are provided by residues K197, E314, and 340 to 343 (GGDT).

It belongs to the phosphoglycerate kinase family. Monomer.

It is found in the cytoplasm. It carries out the reaction (2R)-3-phosphoglycerate + ATP = (2R)-3-phospho-glyceroyl phosphate + ADP. Its pathway is carbohydrate degradation; glycolysis; pyruvate from D-glyceraldehyde 3-phosphate: step 2/5. This is Phosphoglycerate kinase from Pseudomonas aeruginosa (strain ATCC 15692 / DSM 22644 / CIP 104116 / JCM 14847 / LMG 12228 / 1C / PRS 101 / PAO1).